A 538-amino-acid chain; its full sequence is Syncytin-2 (538 aa).

A signal peptide spans 1–15; that stretch reads MGLLLLLLILTPLLA. Over 16 to 478 the chain is Extracellular; it reads AYCHPDFRLL…GWLNWEGTWK (463 aa). A CXXC motif is present at residues 43 to 46; the sequence is CWLC. Cystine bridges form between C43–C46, C43–C439, and C431–C438. 7 N-linked (GlcNAc...) asparagine glycosylation sites follow: N146, N177, N220, N241, N247, N312, and N332. A fusion peptide region spans residues 354–374; the sequence is LIPLLVGLGIVGSAGTGIAGI. Residues 414–430 carry the CKS-17 motif; it reads LQNRRGLDMLTAAQGGI. The CX6CC motif lies at 431–439; the sequence is CLALDEKCC. N443 carries N-linked (GlcNAc...) asparagine glycosylation. The chain crosses the membrane as a helical span at residues 479 to 499; that stretch reads WFSWVLPFTGPLVSLLLLLLF. Over 500 to 538 the chain is Cytoplasmic; that stretch reads GPCLLNLITQFVSSRLQATKLQMKLNKRVHPRNSQESPF.

It belongs to the gamma type-C retroviral envelope protein family. HERV class-I FRD env subfamily. As to quaternary structure, the surface and transmembrane proteins form a heterodimer. They are attached by non-covalent interactions or by a labile interchain disulfide bond. Post-translationally, specific enzymatic cleavages in vivo yield the mature SU and TM proteins. In terms of processing, the CXXC motif is highly conserved across a broad range of retroviral envelope proteins. It is thought to participate in the formation of a labile disulfide bond possibly with the CX6CC motif present in the transmembrane protein.

The protein resides in the virion. The protein localises to the cell membrane. This endogenous retroviral envelope protein has retained its original fusogenic properties and participates in trophoblast fusion and the formation of a syncytium during placenta morphogenesis. The interaction with MFSD2A is apparently important for this process. Its function is as follows. Endogenous envelope proteins may have kept, lost or modified their original function during evolution but this one can still make pseudotypes with MLV, HIV-1 or SIV-1 virions and confer infectivity. Retroviral envelope proteins mediate receptor recognition and membrane fusion during early infection. The surface protein mediates receptor recognition, while the transmembrane protein anchors the envelope heterodimer to the viral membrane through one transmembrane domain. The other hydrophobic domain, called fusion peptide, mediates fusion of the viral membrane with the target cell membrane. In Callithrix jacchus (White-tufted-ear marmoset), this protein is Syncytin-2 (ERVFRD-1).